The following is a 295-amino-acid chain: CCAAT-binding factor complex subunit php4 (295 aa).

Residues 1–19 show a composition bias toward low complexity; the sequence is MESSKSPSEVEKSSSASPA. The tract at residues 1–69 is disordered; the sequence is MESSKSPSEV…GPTSALSVEE (69 aa). Residues 73–111 are a coiled coil; the sequence is RVREKQYQDTIGKLQKENNELLEQLEMLQAQLKNSTLDS. The Nuclear export signal signature appears at 93–100; the sequence is LLEQLEML. The disordered stretch occupies residues 108–130; it reads TLDSPKEVEVNSEVVKPDSATTE.

As to quaternary structure, component of tha CCAAT-binding complex composed of at least php2, php3, php4 and php5. Interacts with crm1 and grx4.

Its subcellular location is the cytoplasm. It is found in the nucleus. The protein resides in the cytoskeleton. It localises to the spindle pole. In terms of biological role, component of the transcription regulatory CCAAT-binding complex. Required for the reprogramming of the cell for iron use. Down-regulates pcl1, sdh4, and isa1 underlow-iron conditions. This is CCAAT-binding factor complex subunit php4 (php4) from Schizosaccharomyces pombe (strain 972 / ATCC 24843) (Fission yeast).